The chain runs to 245 residues: tRNA pseudouridine synthase A (245 aa).

The Nucleophile role is filled by D52. Y110 serves as a coordination point for substrate.

This sequence belongs to the tRNA pseudouridine synthase TruA family. Homodimer.

It catalyses the reaction uridine(38/39/40) in tRNA = pseudouridine(38/39/40) in tRNA. Formation of pseudouridine at positions 38, 39 and 40 in the anticodon stem and loop of transfer RNAs. The sequence is that of tRNA pseudouridine synthase A from Ruminiclostridium cellulolyticum (strain ATCC 35319 / DSM 5812 / JCM 6584 / H10) (Clostridium cellulolyticum).